Reading from the N-terminus, the 157-residue chain is Protein-export protein SecB (157 aa).

It belongs to the SecB family. Homotetramer, a dimer of dimers. One homotetramer interacts with 1 SecA dimer.

The protein resides in the cytoplasm. Functionally, one of the proteins required for the normal export of preproteins out of the cell cytoplasm. It is a molecular chaperone that binds to a subset of precursor proteins, maintaining them in a translocation-competent state. It also specifically binds to its receptor SecA. The polypeptide is Protein-export protein SecB (Proteus mirabilis (strain HI4320)).